Consider the following 599-residue polypeptide: Elongation factor 4 (599 aa).

The 183-residue stretch at 2 to 184 (KNIRNFSIIA…RLVRDIPPPE (183 aa)) folds into the tr-type G domain. GTP contacts are provided by residues 14–19 (DHGKST) and 131–134 (NKID).

It belongs to the TRAFAC class translation factor GTPase superfamily. Classic translation factor GTPase family. LepA subfamily.

Its subcellular location is the cell inner membrane. The enzyme catalyses GTP + H2O = GDP + phosphate + H(+). Functionally, required for accurate and efficient protein synthesis under certain stress conditions. May act as a fidelity factor of the translation reaction, by catalyzing a one-codon backward translocation of tRNAs on improperly translocated ribosomes. Back-translocation proceeds from a post-translocation (POST) complex to a pre-translocation (PRE) complex, thus giving elongation factor G a second chance to translocate the tRNAs correctly. Binds to ribosomes in a GTP-dependent manner. The polypeptide is Elongation factor 4 (Klebsiella pneumoniae (strain 342)).